The primary structure comprises 340 residues: Spike protein P5 (340 aa).

Residues 2–122 (ANQQIGGSTV…NFPIALGVWP (121 aa)) form a domain-1 region. In terms of domain architecture, Collagen-like spans 123 to 141 (SGIKGDKGDPGAPGPAGGT). Residues 142–340 (VVVEDSGASF…IINITAAKIN (199 aa)) form a domain-2 region.

Homotrimer.

Its subcellular location is the virion. Functionally, in association with P31 and P2, forms the spike complexes located at the 5-fold vertices of the capsid. Essential for viral infectivity. The polypeptide is Spike protein P5 (V) (Enterobacteria phage PRD1 (Bacteriophage PRD1)).